The sequence spans 926 residues: G-protein coupled receptor family C group 6 member A (926 aa).

The signal sequence occupies residues 1-18 (MAFLIILITCFVIILATS). Residues 19 to 594 (QPCQTPDDFV…EYLNWNDSLA (576 aa)) are Extracellular-facing. 8 N-linked (GlcNAc...) asparagine glycosylation sites follow: N121, N259, N332, N378, N452, N555, N567, and N590. A helical transmembrane segment spans residues 595–615 (ILLLILSLLGIIFVLVVGIIF). At 616-631 (TRNLNTPVVKSSGGLR) the chain is on the cytoplasmic side. The chain crosses the membrane as a helical span at residues 632–652 (VCYVILLCHFLNFASTSFFIG). Over 653–669 (EPQDFTCKTRQTMFGVS) the chain is Extracellular. Residues 670-690 (FTLCISCILTKSLKILLAFSF) traverse the membrane as a helical segment. Over 691–704 (DPKLQKFLKCLYRP) the chain is Cytoplasmic. Residues 705–725 (ILIIFTCTGIQVVICTLWLIF) form a helical membrane-spanning segment. Over 726 to 748 (AAPTVEVNVSLPRVIILECEEGS) the chain is Extracellular. N733 is a glycosylation site (N-linked (GlcNAc...) asparagine). A helical transmembrane segment spans residues 749–769 (ILAFGTMLGYIAILAFICFIF). The Cytoplasmic segment spans residues 770 to 782 (AFKGKYENYNEAK). Residues 783–803 (FITFGMLIYFIAWITFIPIYA) form a helical membrane-spanning segment. The Extracellular segment spans residues 804–810 (TTFGKYV). A helical transmembrane segment spans residues 811-831 (PAVEIIVILISNYGILYCTFI). Over 832–926 (PKCYVIICKQ…TLPRKRMSSI (95 aa)) the chain is Cytoplasmic.

This sequence belongs to the G-protein coupled receptor 3 family. In terms of assembly, homodimer; disulfide-linked. Isoform 1 is expressed at high level in brain, skeletal muscle, testis, bone, calvaria, osteoblasts and leukocytes. Expressed at intermediate level in liver, heart, kidney and spleen. Expressed at low level in lung, pancreas, placenta and ovary. Not detected in thymus, prostate, small intestine, tongue and colon. Isoform 1 and isoform 2 are expressed in kidney at the same level. Isoform 2 is expressed at lower level than isoform 1 in the other tissues.

The protein localises to the cell membrane. Receptor activated by multiple ligands, including osteocalcin (BGLAP), basic amino acids, and various cations. Activated by amino acids with a preference for basic amino acids such as L-Lys, L-Arg and L-ornithine but also by small and polar amino acids. The L-alpha amino acids respond is augmented by divalent cations Ca(2+) and Mg(2+). Seems to act through a G(q)/G(11) and G(i)-coupled pathway. Regulates testosterone production by acting as a ligand for uncarboxylated osteocalcin hormone: osteocalcin-binding at the surface of Leydig cells initiates a signaling response that promotes the expression of enzymes required for testosterone synthesis in a CREB-dependent manner. Mediates the non-genomic effects of androgens in multiple tissue. May coordinate nutritional and hormonal anabolic signals through the sensing of extracellular amino acids, osteocalcin, divalent ions and its responsiveness to anabolic steroids. The chain is G-protein coupled receptor family C group 6 member A (GPRC6A) from Homo sapiens (Human).